The primary structure comprises 116 residues: Ribonuclease P protein component (116 aa).

It belongs to the RnpA family. In terms of assembly, consists of a catalytic RNA component (M1 or rnpB) and a protein subunit.

It carries out the reaction Endonucleolytic cleavage of RNA, removing 5'-extranucleotides from tRNA precursor.. In terms of biological role, RNaseP catalyzes the removal of the 5'-leader sequence from pre-tRNA to produce the mature 5'-terminus. It can also cleave other RNA substrates such as 4.5S RNA. The protein component plays an auxiliary but essential role in vivo by binding to the 5'-leader sequence and broadening the substrate specificity of the ribozyme. The protein is Ribonuclease P protein component of Bacillus velezensis (strain DSM 23117 / BGSC 10A6 / LMG 26770 / FZB42) (Bacillus amyloliquefaciens subsp. plantarum).